The sequence spans 351 residues: Auxin-responsive protein IAA27 (351 aa).

The disordered stretch occupies residues 1 to 37 (MMNLISFETPPLGRRSQDGGSSSSSITAATTTTNKAK). Residues 21-34 (SSSSSITAATTTTN) show a composition bias toward low complexity. In terms of domain architecture, PB1 spans 233-327 (NMFAKVHMDG…SAKRLYIAKN (95 aa)).

It belongs to the Aux/IAA family. Homodimers and heterodimers. As to expression, expressed in roots and seedlings.

The protein resides in the nucleus. Its function is as follows. Aux/IAA proteins are short-lived transcriptional factors that function as repressors of early auxin response genes at low auxin concentrations. The chain is Auxin-responsive protein IAA27 (IAA27) from Oryza sativa subsp. japonica (Rice).